The chain runs to 154 residues: Cyclin-dependent protein kinase inhibitor SMR11 (154 aa).

Positions 1 to 44 (MEQEEPCEAKETASSSIEPKTPNPNVPDSIPAIDSDSSLSEEEI) are disordered. Over residues 27–38 (PDSIPAIDSDSS) the composition is skewed to low complexity.

As to quaternary structure, interacts with CYCB2-4.

Functionally, probable cyclin-dependent protein kinase (CDK) inhibitor that functions as a repressor of mitosis in the endoreduplication cell cycle. In Arabidopsis thaliana (Mouse-ear cress), this protein is Cyclin-dependent protein kinase inhibitor SMR11.